A 351-amino-acid polypeptide reads, in one-letter code: Ribosomal RNA small subunit methyltransferase H (351 aa).

S-adenosyl-L-methionine contacts are provided by residues 48 to 50 (GGY), Asp-67, Phe-94, Asp-115, and Gln-122. Residues 298–351 (GPVLPSEAETEVNPRARSAKLRAGERTDGPAPPPLSAIETLASLPAPQGRGTRR) are disordered.

It belongs to the methyltransferase superfamily. RsmH family.

It is found in the cytoplasm. The enzyme catalyses cytidine(1402) in 16S rRNA + S-adenosyl-L-methionine = N(4)-methylcytidine(1402) in 16S rRNA + S-adenosyl-L-homocysteine + H(+). In terms of biological role, specifically methylates the N4 position of cytidine in position 1402 (C1402) of 16S rRNA. This is Ribosomal RNA small subunit methyltransferase H from Methylorubrum populi (strain ATCC BAA-705 / NCIMB 13946 / BJ001) (Methylobacterium populi).